The sequence spans 247 residues: Synaptogyrin homolog 1 (247 aa).

One can recognise an MARVEL domain in the interval 21 to 175 (FFKKPTVLFR…AAFFAWRRYE (155 aa)). 4 consecutive transmembrane segments (helical) span residues 25 to 45 (PTVLFRCAALLFGLILWYSVS), 69 to 89 (CSFATAVGFFAVCGAIVLIVL), 105 to 125 (AVLADLVVSAIFTAIFLIGFF), and 151 to 171 (FGILSALLSFLAWGGAAFFAW). A disordered region spans residues 206–247 (DSTGIGHVGAPPPQSSYQSGAAPQTMQQPPSNPYTQSEGYGY). Residues 220-247 (SSYQSGAAPQTMQQPPSNPYTQSEGYGY) show a composition bias toward polar residues.

The protein belongs to the synaptogyrin family. Expressed in a wide variety of neurons and is expressed weakly in the non-neuronal distal tip cells. A punctate pattern was observed in the ventral and dorsal nerve cords and the nerve ring. Weak expression is seen in neuronal cell bodies and commissures.

It is found in the membrane. In Caenorhabditis elegans, this protein is Synaptogyrin homolog 1 (sng-1).